Here is a 314-residue protein sequence, read N- to C-terminus: 2-desacetyl-2-hydroxyethyl bacteriochlorophyllide A dehydrogenase (314 aa).

It functions in the pathway porphyrin-containing compound metabolism; bacteriochlorophyll biosynthesis (light-independent). This protein catalyzes the penultimate step in bacteriochlorophyll a biosynthesis. The protein is 2-desacetyl-2-hydroxyethyl bacteriochlorophyllide A dehydrogenase (bchC) of Rhodobacter capsulatus (strain ATCC BAA-309 / NBRC 16581 / SB1003).